A 578-amino-acid polypeptide reads, in one-letter code: MKYVVVSGGVISGIGKGVLASSTGMLLKTLGLKVTSIKIDPYMNIDAGTMSPLEHGECFVLNDGGETDLDLGNYERYLNVTLTKDHNITTGKIYSHVIAKERKGDYLGKTVQIVPHLTNAIQEWIERVSRIPVDNTGMEPDVCIIELGGTVGDIESAPFVEALRQFQFRVGKENFALIHVSLVPVIHGEQKTKPTQAAIKDLRSLGLVPDMIACRCSETLEKGVIEKIAMFCHVGADQVVNVHDVNSTYHVPLLLLEQKMINYLHQRLQLQEITLSSEDIQRGENLLSKWKSMTGNFDSSMETVKIALVGKYTNLKDSYLSVIKALEHSSMKCRRKLEIMWVEATDLEPETQDTEKAKFHEAWNKVSTADGILVPGGFGSRGTEGMMLASRWARENHIPFLGVCLGLQIATIEFARNVLGVKEGNSAEFFPELDESNQVVVFMPEIDKETMGGSMRLGLRPTYFQQGTEWCAIKKLYGSAESVEERHRHRYEINPNFIERLEEHGLMFVGRDETNKRCEIFEMKDHPFFVATQYHPEYTSKVLDPSKPFLGLVAASSGILDDVIAGKYEFNGDGKSDF.

In terms of domain architecture, Glutamine amidotransferase type-1 spans 305–559; it reads KIALVGKYTN…LGLVAASSGI (255 aa). Catalysis depends on for GATase activity residues cysteine 404, histidine 535, and glutamate 537.

Belongs to the CTP synthase family.

The catalysed reaction is UTP + L-glutamine + ATP + H2O = CTP + L-glutamate + ADP + phosphate + 2 H(+). Its pathway is pyrimidine metabolism; CTP biosynthesis via de novo pathway; CTP from UDP: step 2/2. Catalyzes the ATP-dependent amination of UTP to CTP with either L-glutamine or ammonia as the source of nitrogen. The polypeptide is CTP synthase (URA7) (Candida glabrata (strain ATCC 2001 / BCRC 20586 / JCM 3761 / NBRC 0622 / NRRL Y-65 / CBS 138) (Yeast)).